The sequence spans 92 residues: Small ribosomal subunit protein uS19 (92 aa).

The interval 72–92 is disordered; sequence GEFSPTRSFRGHAGAKNKGKK. The segment covering 80–92 has biased composition (basic residues); sequence FRGHAGAKNKGKK.

The protein belongs to the universal ribosomal protein uS19 family.

Protein S19 forms a complex with S13 that binds strongly to the 16S ribosomal RNA. In Flavobacterium johnsoniae (strain ATCC 17061 / DSM 2064 / JCM 8514 / BCRC 14874 / CCUG 350202 / NBRC 14942 / NCIMB 11054 / UW101) (Cytophaga johnsonae), this protein is Small ribosomal subunit protein uS19.